A 99-amino-acid chain; its full sequence is NADH dehydrogenase [ubiquinone] 1 alpha subcomplex subunit 2 (99 aa).

A2 is subject to N-acetylalanine. A disulfide bond links C24 and C58. At K64 the chain carries N6-acetyllysine; alternate. K64 carries the post-translational modification N6-succinyllysine; alternate.

The protein belongs to the complex I NDUFA2 subunit family. As to quaternary structure, complex I is composed of 45 different subunits.

The protein localises to the mitochondrion inner membrane. Accessory subunit of the mitochondrial membrane respiratory chain NADH dehydrogenase (Complex I), that is believed not to be involved in catalysis. Complex I functions in the transfer of electrons from NADH to the respiratory chain. The immediate electron acceptor for the enzyme is believed to be ubiquinone. The chain is NADH dehydrogenase [ubiquinone] 1 alpha subcomplex subunit 2 (NDUFA2) from Homo sapiens (Human).